The sequence spans 103 residues: Co-chaperonin GroES (103 aa).

The protein belongs to the GroES chaperonin family. Heptamer of 7 subunits arranged in a ring. Interacts with the chaperonin GroEL.

The protein localises to the cytoplasm. Its function is as follows. Together with the chaperonin GroEL, plays an essential role in assisting protein folding. The GroEL-GroES system forms a nano-cage that allows encapsulation of the non-native substrate proteins and provides a physical environment optimized to promote and accelerate protein folding. GroES binds to the apical surface of the GroEL ring, thereby capping the opening of the GroEL channel. The sequence is that of Co-chaperonin GroES from Synechococcus elongatus (strain ATCC 33912 / PCC 7942 / FACHB-805) (Anacystis nidulans R2).